We begin with the raw amino-acid sequence, 155 residues long: Protein FAM162A (155 aa).

Residues 77-103 (RFKKEEEIPETISFEMLDAAKNKIRVK) are required for proapoptotic activity. A helical transmembrane segment spans residues 102 to 121 (VKVSYLMIALTVAGCVYMVI).

Belongs to the UPF0389 family. Interacts with HSP90AB1; HSP90AB1 is essential for FAM162A mitochondrial localization and pro-apoptotic activity. Interacts with VDAC2; the interaction is probably involved in inducing mitochondrial permeability transition.

It is found in the mitochondrion membrane. In terms of biological role, proposed to be involved in regulation of apoptosis; the exact mechanism may differ between cell types/tissues. May be involved in hypoxia-induced cell death of transformed cells implicating cytochrome C release and caspase activation (such as CASP9) and inducing mitochondrial permeability transition. May be involved in hypoxia-induced cell death of neuronal cells probably by promoting release of AIFM1 from mitochondria to cytoplasm and its translocation to the nucleus; however, the involvement of caspases has been reported conflictingly. This chain is Protein FAM162A (Fam162a), found in Rattus norvegicus (Rat).